The following is a 224-amino-acid chain: Homeobox protein Hox-B6 (224 aa).

The short motif at 127–132 (VYPWMQ) is the Antp-type hexapeptide element. A DNA-binding region (homeobox) is located at residues 146 to 205 (GRRGRQTYTRYQTLELEKEFHYNRYLTRRRRIEIAHALCLTERQIKIWFQNRRMKWKKES). At Ser214 the chain carries Phosphoserine.

It belongs to the Antp homeobox family.

The protein resides in the nucleus. Sequence-specific transcription factor which is part of a developmental regulatory system that provides cells with specific positional identities on the anterior-posterior axis. The protein is Homeobox protein Hox-B6 (Hoxb6) of Mus musculus (Mouse).